Consider the following 492-residue polypeptide: Mitochondrial distribution and morphology protein 12 (492 aa).

An SMP-LTD domain is found at 1 to 492; it reads MSIDLNWETV…VYPSFWTFLV (492 aa). Disordered regions lie at residues 68-158, 199-301, and 379-434; these read DFYE…STPG, LEGH…GHPR, and AVGG…GSGN. Positions 78–90 are enriched in acidic residues; that stretch reads VASDDSEGEEDAV. Over residues 130–139 the composition is skewed to gly residues; the sequence is SPGGPGGPGM. Over residues 246 to 257 the composition is skewed to low complexity; it reads LNPNSLAPPSSS. The segment covering 270–285 has biased composition (polar residues); the sequence is TTPAPGSATALSGSNE. Low complexity predominate over residues 387 to 400; sequence GLSSPGEGPSQAQG. The segment covering 401–415 has biased composition (gly residues); sequence QGQGQGQGQGQGQTP. Low complexity predominate over residues 416-428; that stretch reads GAGQQKQQKKQAG.

This sequence belongs to the MDM12 family. As to quaternary structure, component of the ER-mitochondria encounter structure (ERMES) or MDM complex, composed of MMM1, MDM10, MDM12 and MDM34. An MMM1 homodimer associates with one molecule of MDM12 on each side in a pairwise head-to-tail manner, and the SMP-LTD domains of MMM1 and MDM12 generate a continuous hydrophobic tunnel for phospholipid trafficking.

Its subcellular location is the mitochondrion outer membrane. The protein resides in the endoplasmic reticulum membrane. Component of the ERMES/MDM complex, which serves as a molecular tether to connect the endoplasmic reticulum (ER) and mitochondria. Components of this complex are involved in the control of mitochondrial shape and protein biogenesis, and function in nonvesicular lipid trafficking between the ER and mitochondria. MDM12 is required for the interaction of the ER-resident membrane protein MMM1 and the outer mitochondrial membrane-resident beta-barrel protein MDM10. The MDM12-MMM1 subcomplex functions in the major beta-barrel assembly pathway that is responsible for biogenesis of all mitochondrial outer membrane beta-barrel proteins, and acts in a late step after the SAM complex. The MDM10-MDM12-MMM1 subcomplex further acts in the TOM40-specific pathway after the action of the MDM12-MMM1 complex. Essential for establishing and maintaining the structure of mitochondria and maintenance of mtDNA nucleoids. This chain is Mitochondrial distribution and morphology protein 12, found in Chaetomium globosum (strain ATCC 6205 / CBS 148.51 / DSM 1962 / NBRC 6347 / NRRL 1970) (Soil fungus).